The sequence spans 670 residues: Oligopeptidase PepF (670 aa).

His456 is a Zn(2+) binding site. Glu457 is an active-site residue. His460 and His463 together coordinate Zn(2+).

The protein belongs to the peptidase M3B family. It depends on Zn(2+) as a cofactor.

The protein resides in the cytoplasm. Overexpression results in inhibition of sporulation initiation. This sporulation deficiency could be the result of hydrolysis by PepF of the PhrA peptide, a phosphatase regulator. Thus, overexpression of PepF appears to act at the level of the phosphorelay, most likely through modulation of the negative role played by phosphatases. Overexpression of PepF also affects the activity of the competence and sporulation stimulating factor PhrC. The chain is Oligopeptidase PepF from Bacillus subtilis (strain 168).